The following is a 675-amino-acid chain: Glycerophosphocholine phosphodiesterase GPCPD1 (675 aa).

Positions 1-115 (MTPSQVTFEI…IIIDDGQFGI (115 aa)) constitute a CBM20 domain. Substrate-binding positions include Arg-70 and 88–89 (HK). A phosphoserine mark is found at Ser-178 and Ser-427. The GP-PDE domain maps to 321-621 (PLDVGHRGAG…DRIYDWMPEQ (301 aa)). A Phosphotyrosine modification is found at Tyr-611.

It belongs to the glycerophosphoryl diester phosphodiesterase family. Widely expressed with highest levels in skeletal muscle and heart.

Its subcellular location is the cytoplasm. It localises to the cytosol. It catalyses the reaction sn-glycerol 3-phosphocholine + H2O = sn-glycerol 3-phosphate + choline + H(+). Its function is as follows. May be involved in the negative regulation of skeletal muscle differentiation, independently of its glycerophosphocholine phosphodiesterase activity. In Mus musculus (Mouse), this protein is Glycerophosphocholine phosphodiesterase GPCPD1 (Gpcpd1).